We begin with the raw amino-acid sequence, 472 residues long: UDP-N-acetylmuramoyl-L-alanyl-D-glutamate--2,6-diaminopimelate ligase (472 aa).

Ser-21 provides a ligand contact to UDP-N-acetyl-alpha-D-muramoyl-L-alanyl-D-glutamate. 99–105 is an ATP binding site; that stretch reads GTNGKTS. UDP-N-acetyl-alpha-D-muramoyl-L-alanyl-D-glutamate contacts are provided by residues 143-144, Ser-170, Gln-176, and Arg-178; that span reads TT. Position 210 is an N6-carboxylysine (Lys-210). Residues Arg-367, 391–394, Gly-440, and Glu-444 each bind meso-2,6-diaminopimelate; that span reads DNPR. Positions 391-394 match the Meso-diaminopimelate recognition motif motif; the sequence is DNPR.

Belongs to the MurCDEF family. MurE subfamily. The cofactor is Mg(2+). Carboxylation is probably crucial for Mg(2+) binding and, consequently, for the gamma-phosphate positioning of ATP.

It is found in the cytoplasm. It carries out the reaction UDP-N-acetyl-alpha-D-muramoyl-L-alanyl-D-glutamate + meso-2,6-diaminopimelate + ATP = UDP-N-acetyl-alpha-D-muramoyl-L-alanyl-gamma-D-glutamyl-meso-2,6-diaminopimelate + ADP + phosphate + H(+). Its pathway is cell wall biogenesis; peptidoglycan biosynthesis. Catalyzes the addition of meso-diaminopimelic acid to the nucleotide precursor UDP-N-acetylmuramoyl-L-alanyl-D-glutamate (UMAG) in the biosynthesis of bacterial cell-wall peptidoglycan. This chain is UDP-N-acetylmuramoyl-L-alanyl-D-glutamate--2,6-diaminopimelate ligase, found in Anaplasma marginale (strain St. Maries).